Reading from the N-terminus, the 284-residue chain is Putative ribosome biogenesis protein C306.07c (284 aa).

The disordered stretch occupies residues 264–284 (LKKSELRAQKRGSSGEGKGNK).

Belongs to the universal ribosomal protein uL1 family. Highly divergent. In terms of assembly, component of the 90S pre-ribosomes.

Its subcellular location is the nucleus. It is found in the nucleolus. Involved in rRNA-processing and ribosome biosynthesis. The sequence is that of Putative ribosome biogenesis protein C306.07c from Schizosaccharomyces pombe (strain 972 / ATCC 24843) (Fission yeast).